Reading from the N-terminus, the 401-residue chain is Dual-specificity RNA methyltransferase RlmN (401 aa).

Glutamate 114 serves as the catalytic Proton acceptor. The Radical SAM core domain maps to 120–365 (DKGRGTLCVS…TIVRRTRGDD (246 aa)). Cysteine 127 and cysteine 370 form a disulfide bridge. The [4Fe-4S] cluster site is built by cysteine 134, cysteine 138, and cysteine 141. S-adenosyl-L-methionine is bound by residues 187-188 (GE), serine 219, 241-243 (SLH), and asparagine 327. Residue cysteine 370 is the S-methylcysteine intermediate of the active site.

The protein belongs to the radical SAM superfamily. RlmN family. Requires [4Fe-4S] cluster as cofactor.

Its subcellular location is the cytoplasm. The enzyme catalyses adenosine(2503) in 23S rRNA + 2 reduced [2Fe-2S]-[ferredoxin] + 2 S-adenosyl-L-methionine = 2-methyladenosine(2503) in 23S rRNA + 5'-deoxyadenosine + L-methionine + 2 oxidized [2Fe-2S]-[ferredoxin] + S-adenosyl-L-homocysteine. The catalysed reaction is adenosine(37) in tRNA + 2 reduced [2Fe-2S]-[ferredoxin] + 2 S-adenosyl-L-methionine = 2-methyladenosine(37) in tRNA + 5'-deoxyadenosine + L-methionine + 2 oxidized [2Fe-2S]-[ferredoxin] + S-adenosyl-L-homocysteine. In terms of biological role, specifically methylates position 2 of adenine 2503 in 23S rRNA and position 2 of adenine 37 in tRNAs. m2A2503 modification seems to play a crucial role in the proofreading step occurring at the peptidyl transferase center and thus would serve to optimize ribosomal fidelity. The chain is Dual-specificity RNA methyltransferase RlmN from Xanthomonas oryzae pv. oryzae (strain MAFF 311018).